Here is a 133-residue protein sequence, read N- to C-terminus: Small ribosomal subunit protein uS11 (133 aa).

It belongs to the universal ribosomal protein uS11 family. As to quaternary structure, part of the 30S ribosomal subunit.

Its function is as follows. Located on the platform of the 30S subunit. This Aeropyrum pernix (strain ATCC 700893 / DSM 11879 / JCM 9820 / NBRC 100138 / K1) protein is Small ribosomal subunit protein uS11.